A 102-amino-acid chain; its full sequence is Caroteno-chlorophyll a-c-binding protein (102 aa).

Chlorophyll a-binding residues include E36 and H39. The chain crosses the membrane as a helical span at residues 78–98; it reads VLGLIKIVPAGLWGIMIFYAA.

This sequence belongs to the light-harvesting chlorophyll a/b-binding (LHC) protein family. The LHC complex consists of chlorophyll a-b binding proteins. It depends on Binds at least 14 chlorophylls (8 Chl-a and 6 Chl-b) and carotenoids such as lutein and neoxanthin. as a cofactor. Post-translationally, photoregulated by reversible phosphorylation of its threonine residues.

The protein localises to the plastid. The protein resides in the chloroplast thylakoid membrane. Functionally, the light-harvesting complex (LHC) functions as a light receptor, it captures and delivers excitation energy to photosystems with which it is closely associated. This is Caroteno-chlorophyll a-c-binding protein from Amphidinium carterae (Dinoflagellate).